The following is a 420-amino-acid chain: D-tagatose-1,6-bisphosphate aldolase subunit GatZ (420 aa).

This sequence belongs to the GatZ/KbaZ family. GatZ subfamily. In terms of assembly, forms a complex with GatY.

Its pathway is carbohydrate metabolism; D-tagatose 6-phosphate degradation; D-glyceraldehyde 3-phosphate and glycerone phosphate from D-tagatose 6-phosphate: step 2/2. Its function is as follows. Component of the tagatose-1,6-bisphosphate aldolase GatYZ that is required for full activity and stability of the Y subunit. Could have a chaperone-like function for the proper and stable folding of GatY. When expressed alone, GatZ does not show any aldolase activity. Is involved in the catabolism of galactitol. In Escherichia coli O6:H1 (strain CFT073 / ATCC 700928 / UPEC), this protein is D-tagatose-1,6-bisphosphate aldolase subunit GatZ.